The sequence spans 124 residues: Ribonuclease pancreatic (124 aa).

Substrate-binding residues include K7 and R10. The active-site Proton acceptor is the H12. 4 disulfides stabilise this stretch: C26-C84, C40-C95, C58-C110, and C65-C72. N34 is a glycosylation site (N-linked (GlcNAc...) asparagine; partial). Substrate-binding positions include 41–45 (KPVBT), K66, and R85. Residue H119 is the Proton donor of the active site.

This sequence belongs to the pancreatic ribonuclease family. As to quaternary structure, monomer. Interacts with and forms tight 1:1 complexes with RNH1. Dimerization of two such complexes may occur. Interaction with RNH1 inhibits this protein. Pancreas.

The protein localises to the secreted. The catalysed reaction is an [RNA] containing cytidine + H2O = an [RNA]-3'-cytidine-3'-phosphate + a 5'-hydroxy-ribonucleotide-3'-[RNA].. It catalyses the reaction an [RNA] containing uridine + H2O = an [RNA]-3'-uridine-3'-phosphate + a 5'-hydroxy-ribonucleotide-3'-[RNA].. Endonuclease that catalyzes the cleavage of RNA on the 3' side of pyrimidine nucleotides. Acts on single-stranded and double-stranded RNA. This is Ribonuclease pancreatic (RNASE1) from Damaliscus korrigum (Topi).